Reading from the N-terminus, the 264-residue chain is Thymidylate synthase (264 aa).

Position 21 (R21) interacts with dUMP. Residue H51 participates in (6R)-5,10-methylene-5,6,7,8-tetrahydrofolate binding. 126-127 (RR) lines the dUMP pocket. C146 (nucleophile) is an active-site residue. DUMP-binding positions include 166–169 (RSCD), N177, and 207–209 (HLY). Residue D169 coordinates (6R)-5,10-methylene-5,6,7,8-tetrahydrofolate. S263 is a binding site for (6R)-5,10-methylene-5,6,7,8-tetrahydrofolate.

Belongs to the thymidylate synthase family. Bacterial-type ThyA subfamily. As to quaternary structure, homodimer.

The protein localises to the cytoplasm. The enzyme catalyses dUMP + (6R)-5,10-methylene-5,6,7,8-tetrahydrofolate = 7,8-dihydrofolate + dTMP. The protein operates within pyrimidine metabolism; dTTP biosynthesis. Catalyzes the reductive methylation of 2'-deoxyuridine-5'-monophosphate (dUMP) to 2'-deoxythymidine-5'-monophosphate (dTMP) while utilizing 5,10-methylenetetrahydrofolate (mTHF) as the methyl donor and reductant in the reaction, yielding dihydrofolate (DHF) as a by-product. This enzymatic reaction provides an intracellular de novo source of dTMP, an essential precursor for DNA biosynthesis. This chain is Thymidylate synthase, found in Buchnera aphidicola subsp. Acyrthosiphon pisum (strain Tuc7).